A 125-amino-acid polypeptide reads, in one-letter code: UPF0102 protein mlr4633 (125 aa).

Belongs to the UPF0102 family.

This is UPF0102 protein mlr4633 from Mesorhizobium japonicum (strain LMG 29417 / CECT 9101 / MAFF 303099) (Mesorhizobium loti (strain MAFF 303099)).